Reading from the N-terminus, the 215-residue chain is Urease accessory protein UreG (215 aa).

24–31 lines the GTP pocket; sequence GPVGSGKT.

The protein belongs to the SIMIBI class G3E GTPase family. UreG subfamily. Homodimer. UreD, UreF and UreG form a complex that acts as a GTP-hydrolysis-dependent molecular chaperone, activating the urease apoprotein by helping to assemble the nickel containing metallocenter of UreC. The UreE protein probably delivers the nickel.

The protein localises to the cytoplasm. Functionally, facilitates the functional incorporation of the urease nickel metallocenter. This process requires GTP hydrolysis, probably effectuated by UreG. The polypeptide is Urease accessory protein UreG (Burkholderia orbicola (strain MC0-3)).